The chain runs to 145 residues: D-aminoacyl-tRNA deacylase (145 aa).

A Gly-cisPro motif, important for rejection of L-amino acids motif is present at residues 137-138; it reads GP.

It belongs to the DTD family. As to quaternary structure, homodimer.

Its subcellular location is the cytoplasm. It catalyses the reaction glycyl-tRNA(Ala) + H2O = tRNA(Ala) + glycine + H(+). The catalysed reaction is a D-aminoacyl-tRNA + H2O = a tRNA + a D-alpha-amino acid + H(+). In terms of biological role, an aminoacyl-tRNA editing enzyme that deacylates mischarged D-aminoacyl-tRNAs. Also deacylates mischarged glycyl-tRNA(Ala), protecting cells against glycine mischarging by AlaRS. Acts via tRNA-based rather than protein-based catalysis; rejects L-amino acids rather than detecting D-amino acids in the active site. By recycling D-aminoacyl-tRNA to D-amino acids and free tRNA molecules, this enzyme counteracts the toxicity associated with the formation of D-aminoacyl-tRNA entities in vivo and helps enforce protein L-homochirality. This chain is D-aminoacyl-tRNA deacylase, found in Shewanella denitrificans (strain OS217 / ATCC BAA-1090 / DSM 15013).